Consider the following 95-residue polypeptide: Co-chaperonin GroES (95 aa).

It belongs to the GroES chaperonin family. In terms of assembly, heptamer of 7 subunits arranged in a ring. Interacts with the chaperonin GroEL.

The protein localises to the cytoplasm. Together with the chaperonin GroEL, plays an essential role in assisting protein folding. The GroEL-GroES system forms a nano-cage that allows encapsulation of the non-native substrate proteins and provides a physical environment optimized to promote and accelerate protein folding. GroES binds to the apical surface of the GroEL ring, thereby capping the opening of the GroEL channel. This is Co-chaperonin GroES from Chlorobaculum parvum (strain DSM 263 / NCIMB 8327) (Chlorobium vibrioforme subsp. thiosulfatophilum).